A 206-amino-acid polypeptide reads, in one-letter code: Ribosomal RNA large subunit methyltransferase E (206 aa).

The S-adenosyl-L-methionine site is built by Gly60, Trp62, Asp80, Asp96, and Asp121. Catalysis depends on Lys161, which acts as the Proton acceptor.

It belongs to the class I-like SAM-binding methyltransferase superfamily. RNA methyltransferase RlmE family.

Its subcellular location is the cytoplasm. The enzyme catalyses uridine(2552) in 23S rRNA + S-adenosyl-L-methionine = 2'-O-methyluridine(2552) in 23S rRNA + S-adenosyl-L-homocysteine + H(+). In terms of biological role, specifically methylates the uridine in position 2552 of 23S rRNA at the 2'-O position of the ribose in the fully assembled 50S ribosomal subunit. This is Ribosomal RNA large subunit methyltransferase E from Legionella pneumophila (strain Paris).